Reading from the N-terminus, the 205-residue chain is Imidazole glycerol phosphate synthase subunit HisH (205 aa).

One can recognise a Glutamine amidotransferase type-1 domain in the interval 1 to 205; that stretch reads MITIVDYQMG…RFATAPVEVA (205 aa). C79 functions as the Nucleophile in the catalytic mechanism. Active-site residues include H182 and E184.

As to quaternary structure, heterodimer of HisH and HisF.

Its subcellular location is the cytoplasm. The enzyme catalyses 5-[(5-phospho-1-deoxy-D-ribulos-1-ylimino)methylamino]-1-(5-phospho-beta-D-ribosyl)imidazole-4-carboxamide + L-glutamine = D-erythro-1-(imidazol-4-yl)glycerol 3-phosphate + 5-amino-1-(5-phospho-beta-D-ribosyl)imidazole-4-carboxamide + L-glutamate + H(+). The catalysed reaction is L-glutamine + H2O = L-glutamate + NH4(+). It participates in amino-acid biosynthesis; L-histidine biosynthesis; L-histidine from 5-phospho-alpha-D-ribose 1-diphosphate: step 5/9. IGPS catalyzes the conversion of PRFAR and glutamine to IGP, AICAR and glutamate. The HisH subunit catalyzes the hydrolysis of glutamine to glutamate and ammonia as part of the synthesis of IGP and AICAR. The resulting ammonia molecule is channeled to the active site of HisF. In Rhodopirellula baltica (strain DSM 10527 / NCIMB 13988 / SH1), this protein is Imidazole glycerol phosphate synthase subunit HisH.